The sequence spans 318 residues: MSDASFNASTARAAHRPDEAGFGDYFALLKPRVMSLVVFTALVGLVAAPVSVHPFIGFCAILFIAIGGGASGALNMWWDADIDQVMKRTKKRPIPAGKVEPGEALALGLGLSGLSVMMLALATNVLAGAFLAFTIFFYVVVYTMWLKRTTPQNIVIGGAAGAFPPVIGWIAATGDMSVEPWLMFALTFMWTPPHFWALALFMRSDYDDAGVPMLTVTHGRRATRVHILIYTILLALLALGTAFSNIGGPIYLAVALVLNALFLLGAIRIWRRDEADSEADNFKTERGFFKLSLLYLFLHFGAILAEALLRPYGLGGWG.

The next 9 helical transmembrane spans lie at 33-53 (VMSLVVFTALVGLVAAPVSVH), 54-74 (PFIGFCAILFIAIGGGASGAL), 102-122 (GEALALGLGLSGLSVMMLALA), 125-145 (VLAGAFLAFTIFFYVVVYTMW), 154-174 (IVIGGAAGAFPPVIGWIAATG), 181-201 (WLMFALTFMWTPPHFWALALF), 225-245 (VHILIYTILLALLALGTAFSN), 246-266 (IGGPIYLAVALVLNALFLLGA), and 288-308 (FFKLSLLYLFLHFGAILAEAL).

The protein belongs to the UbiA prenyltransferase family. Protoheme IX farnesyltransferase subfamily. In terms of assembly, interacts with CtaA.

It is found in the cell inner membrane. It carries out the reaction heme b + (2E,6E)-farnesyl diphosphate + H2O = Fe(II)-heme o + diphosphate. It functions in the pathway porphyrin-containing compound metabolism; heme O biosynthesis; heme O from protoheme: step 1/1. Functionally, converts heme B (protoheme IX) to heme O by substitution of the vinyl group on carbon 2 of heme B porphyrin ring with a hydroxyethyl farnesyl side group. The sequence is that of Protoheme IX farnesyltransferase from Ruegeria pomeroyi (strain ATCC 700808 / DSM 15171 / DSS-3) (Silicibacter pomeroyi).